The sequence spans 273 residues: uncharacterized protein (273 aa).

It localises to the virion. This is an uncharacterized protein from Acanthamoeba polyphaga (Amoeba).